The chain runs to 286 residues: Translocon-associated protein subunit alpha (286 aa).

Positions 1–20 (MSSLRRLLLLLLLVFPATLL) are cleaved as a signal peptide. The Lumenal segment spans residues 21-207 (LRVGPGGSLA…EREDGLDGET (187 aa)). Residues 37-75 (EDEETVEDSIIEDEDDEAEVEEDEPTDLAEDKEEDDVSG) are compositionally biased toward acidic residues. The tract at residues 37–83 (EDEETVEDSIIEDEDDEAEVEEDEPTDLAEDKEEDDVSGEPEASPSA) is disordered. N-linked (GlcNAc...) asparagine glycans are attached at residues asparagine 136 and asparagine 191. Residues 208–228 (IFMYMFLAGLGLLVVVGLHQL) form a helical membrane-spanning segment. The Cytoplasmic segment spans residues 229–286 (LESRKRKRPIQKVEMGTSSQNDVDMSWIPQETLNQINKASPRRLPRKRAQKRSVGSDE). The residue at position 247 (serine 247) is a Phosphoserine. Residue threonine 260 is modified to Phosphothreonine. The disordered stretch occupies residues 261–286 (LNQINKASPRRLPRKRAQKRSVGSDE). Position 268 is a phosphoserine (serine 268). Residues 268-279 (SPRRLPRKRAQK) are compositionally biased toward basic residues.

The protein belongs to the TRAP-alpha family. In terms of assembly, heterotetramer of TRAP-alpha, TRAP-beta, TRAP-delta and TRAP-gamma. Interacts with palmitoylated calnexin (CALX), the interaction is required for efficient folding of glycosylated proteins. Phosphorylated in its cytoplasmic tail.

Its subcellular location is the endoplasmic reticulum membrane. TRAP proteins are part of a complex whose function is to bind calcium to the ER membrane and thereby regulate the retention of ER resident proteins. May be involved in the recycling of the translocation apparatus after completion of the translocation process or may function as a membrane-bound chaperone facilitating folding of translocated proteins. The polypeptide is Translocon-associated protein subunit alpha (SSR1) (Bos taurus (Bovine)).